Here is a 921-residue protein sequence, read N- to C-terminus: TRPM8 channel-associated factor 1 (921 aa).

A Peptidase M60 domain is found at 542 to 841 (YCWMSTGLYI…TYLQLQEAFG (300 aa)).

The protein belongs to the TCAF family. As to quaternary structure, interacts with TRPM8 (via N-terminus and C-terminus domains); the interaction inhibits TRPM8 channel activity. Interacts with TRPV6.

It is found in the cell membrane. Positively regulates the plasma membrane cation channel TRPM8 activity. Involved in the recruitment of TRPM8 to the cell surface. Promotes prostate cancer cell migration inhibition in a TRPM8-dependent manner. In Bos taurus (Bovine), this protein is TRPM8 channel-associated factor 1.